Reading from the N-terminus, the 181-residue chain is Sodium/potassium-transporting ATPase subunit beta-1-interacting protein 3 (181 aa).

Transmembrane regions (helical) follow at residues 2–22 (GCCT…LSAL), 35–55 (APIL…FGTI), 62–82 (IMVY…IICF), and 152–172 (VQIL…SISM).

It belongs to the NKAIN family. As to quaternary structure, interacts with ATP1B1. As to expression, detected in the brain only and specifically in neurons. Expressed in multiple regions such as cerebral cortex, thalamus, hippocampus, olfactory bulb and brainstem as well as in cerebellum with low expression in granular cell layer.

The protein localises to the cell membrane. The protein is Sodium/potassium-transporting ATPase subunit beta-1-interacting protein 3 (Nkain3) of Mus musculus (Mouse).